A 247-amino-acid chain; its full sequence is 1-(5-phosphoribosyl)-5-[(5-phosphoribosylamino)methylideneamino] imidazole-4-carboxamide isomerase (247 aa).

Asp-8 acts as the Proton acceptor in catalysis. Asp-129 acts as the Proton donor in catalysis.

This sequence belongs to the HisA/HisF family.

It is found in the cytoplasm. It catalyses the reaction 1-(5-phospho-beta-D-ribosyl)-5-[(5-phospho-beta-D-ribosylamino)methylideneamino]imidazole-4-carboxamide = 5-[(5-phospho-1-deoxy-D-ribulos-1-ylimino)methylamino]-1-(5-phospho-beta-D-ribosyl)imidazole-4-carboxamide. It participates in amino-acid biosynthesis; L-histidine biosynthesis; L-histidine from 5-phospho-alpha-D-ribose 1-diphosphate: step 4/9. This is 1-(5-phosphoribosyl)-5-[(5-phosphoribosylamino)methylideneamino] imidazole-4-carboxamide isomerase from Bradyrhizobium sp. (strain BTAi1 / ATCC BAA-1182).